The primary structure comprises 168 residues: Photosystem I assembly protein Ycf3 (168 aa).

3 TPR repeats span residues 35–68, 72–105, and 120–153; these read AFTY…EIDP, SYIL…NPFL, and GEQA…TPGN.

It belongs to the Ycf3 family.

The protein resides in the plastid. The protein localises to the chloroplast thylakoid membrane. Functionally, essential for the assembly of the photosystem I (PSI) complex. May act as a chaperone-like factor to guide the assembly of the PSI subunits. The sequence is that of Photosystem I assembly protein Ycf3 from Illicium oligandrum (Star anise).